A 154-amino-acid chain; its full sequence is Small ribosomal subunit protein uS9 (154 aa).

Residues 135 to 154 form a disordered region; that stretch reads KESKKYGLKKARKAPQYSKR. Residues 140 to 154 are compositionally biased toward basic residues; sequence YGLKKARKAPQYSKR.

Belongs to the universal ribosomal protein uS9 family.

The protein is Small ribosomal subunit protein uS9 of Salinispora arenicola (strain CNS-205).